A 379-amino-acid polypeptide reads, in one-letter code: MSELSFDAPVWRHGKALRKGYTTGSCATAAAKVAALMVLRQHLIHQVSIVTPSGVTLCLNVESPHIEGQQAIAAIRKDGGDDVDATHGMLIFARVTLNDSGEITLTGGEGIGTVTRKGVGLPLGSAAINRTPRHTIESAVREAIGPARGADVEIFAPEGEARAQKTYNSRLGILGGISIIGTTGIVTPMSEESWKRSLSLELEIKRASGLTRVILVPGNHGERFVREQMGVDTQAVVTMSNFVGYMIEEAVRLGFCQIVLVGHPGKLIKIAAGIFHTHSHIADARMETLVAHLALLGAPLELLTLVSDCDTTEAAMEHIEAYGFGHIYNHLARRICLRVMQMLRFTKTPPVCDAILFSFDNHILGSNRPVDEIAKELQC.

Belongs to the CbiD family.

The catalysed reaction is Co-precorrin-5B + S-adenosyl-L-methionine = Co-precorrin-6A + S-adenosyl-L-homocysteine. Its pathway is cofactor biosynthesis; adenosylcobalamin biosynthesis; cob(II)yrinate a,c-diamide from sirohydrochlorin (anaerobic route): step 6/10. Catalyzes the methylation of C-1 in cobalt-precorrin-5B to form cobalt-precorrin-6A. The sequence is that of Cobalt-precorrin-5B C(1)-methyltransferase from Salmonella paratyphi B (strain ATCC BAA-1250 / SPB7).